We begin with the raw amino-acid sequence, 1028 residues long: Sodium/potassium-transporting ATPase subunit alpha-4 (1028 aa).

Residues 1–36 (MEPGKETAATSEQKPRPTLRASNTNRQPKVKRRKKD) form a disordered region. Topologically, residues 1–92 (MEPGKETAAT…NVLTPPPTTP (92 aa)) are cytoplasmic. The interaction with phosphoinositide-3 kinase stretch occupies residues 87–89 (PPP). A helical membrane pass occupies residues 93-113 (EWIKFCKQLFGGFSLLLWTGS). The Extracellular portion of the chain corresponds to 114–137 (LLCFLAYGIHVSYYQENANKDNLY). The chain crosses the membrane as a helical span at residues 138 to 158 (LGIVLSAVVIITGCFSYYQEA). Topologically, residues 159-294 (KSSKIMESFK…MGKTPIATEI (136 aa)) are cytoplasmic. Residues 295–314 (EHFIHIITAVAVFLGVTFFF) traverse the membrane as a helical segment. The Extracellular segment spans residues 315–326 (LSLILGYTWLDA). Residues 327-344 (VIFLIGIIVANVPEGLLA) traverse the membrane as a helical segment. At 345 to 777 (TVTVCLTLTA…EEGRLIFDNL (433 aa)) the chain is on the cytoplasmic side. The active-site 4-aspartylphosphate intermediate is aspartate 382. Residues aspartate 722 and aspartate 726 each contribute to the Mg(2+) site. The chain crosses the membrane as a helical span at residues 778 to 797 (KKSIAYTLTSNIPEITPFLL). At 798 to 807 (FIVLSIPLPL) the chain is on the extracellular side. Residues 808–828 (GTITILCIDLGTDMVPAISLA) form a helical membrane-spanning segment. Residues 829–848 (YETPESDIMKRLPRNPKTDN) are Cytoplasmic-facing. The helical transmembrane segment at 849–871 (LVNDRLIGMAYGQIGMIQALAGF) threads the bilayer. Residues 872–923 (FTYFVILAENGFKPLDLLGIRLYWDDTNLNDLEDTYGQQWTYEQRKVVEFTC) lie on the Extracellular side of the membrane. A helical membrane pass occupies residues 924-943 (QTAFFISIVIVQWADLIICK). The Cytoplasmic portion of the chain corresponds to 944–956 (TRRNSLFKQGMKN). Phosphoserine; by PKA is present on serine 948. A helical membrane pass occupies residues 957–975 (KVLIFGLLEETILAACLSY). Residues 976 to 990 (IPGMDVALRMYPLKI) are Extracellular-facing. The chain crosses the membrane as a helical span at residues 991–1011 (NWWFCALPYSVLIFIYDEVRK). Residues 1012–1028 (LIIRRRPGGWLEKETYY) lie on the Cytoplasmic side of the membrane.

The protein belongs to the cation transport ATPase (P-type) (TC 3.A.3) family. Type IIC subfamily. As to quaternary structure, the sodium/potassium-transporting ATPase is composed of a catalytic alpha subunit, an auxiliary non-catalytic beta subunit and an additional regulatory subunit.

The protein localises to the cell membrane. It carries out the reaction K(+)(out) + Na(+)(in) + ATP + H2O = K(+)(in) + Na(+)(out) + ADP + phosphate + H(+). Its activity is regulated as follows. Specifically inhibited by an endogenous cardiac glycoside, ouabain. In terms of biological role, this is the catalytic component of the active enzyme, which catalyzes the hydrolysis of ATP coupled with the exchange of sodium and potassium ions across the plasma membrane. This action creates the electrochemical gradient of sodium and potassium ions, providing the energy for active transport of various nutrients. Plays a role in sperm motility. This is Sodium/potassium-transporting ATPase subunit alpha-4 (Atp1a4) from Rattus norvegicus (Rat).